The chain runs to 259 residues: Acetylglutamate kinase (259 aa).

Residues 46–47 (GG), R68, and N162 each bind substrate.

It belongs to the acetylglutamate kinase family. ArgB subfamily.

It localises to the cytoplasm. The catalysed reaction is N-acetyl-L-glutamate + ATP = N-acetyl-L-glutamyl 5-phosphate + ADP. The protein operates within amino-acid biosynthesis; L-arginine biosynthesis; N(2)-acetyl-L-ornithine from L-glutamate: step 2/4. In terms of biological role, catalyzes the ATP-dependent phosphorylation of N-acetyl-L-glutamate. The protein is Acetylglutamate kinase of Roseiflexus castenholzii (strain DSM 13941 / HLO8).